The chain runs to 110 residues: DNA-binding protein PAE3044 (110 aa).

It belongs to the PDCD5 family.

This Pyrobaculum aerophilum (strain ATCC 51768 / DSM 7523 / JCM 9630 / CIP 104966 / NBRC 100827 / IM2) protein is DNA-binding protein PAE3044.